A 116-amino-acid chain; its full sequence is Large ribosomal subunit protein bL19 (116 aa).

This sequence belongs to the bacterial ribosomal protein bL19 family.

Its function is as follows. This protein is located at the 30S-50S ribosomal subunit interface and may play a role in the structure and function of the aminoacyl-tRNA binding site. The chain is Large ribosomal subunit protein bL19 from Syntrophomonas wolfei subsp. wolfei (strain DSM 2245B / Goettingen).